The sequence spans 160 residues: Cytochrome c-type biogenesis protein CcmE (160 aa).

The Cytoplasmic segment spans residues 1–8; the sequence is MNPRRKQR. Residues 9–29 traverse the membrane as a helical; Signal-anchor for type II membrane protein segment; it reads LTWVAILVIGVSVATGLMLYA. At 30-160 the chain is on the periplasmic side; that stretch reads LSQSIDLFYT…PNTVEKGEGQ (131 aa). Positions 130 and 134 each coordinate heme.

Belongs to the CcmE/CycJ family.

It is found in the cell inner membrane. Heme chaperone required for the biogenesis of c-type cytochromes. Transiently binds heme delivered by CcmC and transfers the heme to apo-cytochromes in a process facilitated by CcmF and CcmH. The chain is Cytochrome c-type biogenesis protein CcmE from Idiomarina loihiensis (strain ATCC BAA-735 / DSM 15497 / L2-TR).